A 134-amino-acid polypeptide reads, in one-letter code: Protein Turandot E (134 aa).

The N-terminal stretch at 1-38 (MSYNRTLHSTTSILKMNSALQISCLLLVLGCLLGSGHG) is a signal peptide.

Belongs to the Turandot family.

Its subcellular location is the secreted. A humoral factor that may play a role in stress tolerance. The protein is Protein Turandot E of Drosophila yakuba (Fruit fly).